The primary structure comprises 888 residues: Patched domain-containing protein 1 (888 aa).

Residues 20–40 (FIASHPVFFASAPVLISILLG) form a helical membrane-spanning segment. N-linked (GlcNAc...) asparagine glycans are attached at residues asparagine 77, asparagine 133, and asparagine 167. The 160-residue stretch at 268 to 427 (SERYLVTSLI…LSFYGSSLVF (160 aa)) folds into the SSD domain. The next 2 helical transmembrane spans lie at 273–293 (VTSL…QDCV) and 298–318 (WLGL…AGII). N-linked (GlcNAc...) asparagine glycans are attached at residues asparagine 319 and asparagine 326. Helical transmembrane passes span 328–348 (TFLG…FEML), 373–393 (LSFS…ASPF), 407–427 (CIAI…SLVF), and 502–522 (PFVV…YLQV). Residues asparagine 568, asparagine 599, and asparagine 608 are each glycosylated (N-linked (GlcNAc...) asparagine). The next 2 membrane-spanning stretches (helical) occupy residues 707–727 (ALFL…NVWI) and 738–758 (VIGF…LCLI). Residue asparagine 762 is glycosylated (N-linked (GlcNAc...) asparagine). A helical transmembrane segment spans residues 795–815 (GVAILQSYLCYIVGLFPLAAV). An N-linked (GlcNAc...) asparagine glycan is attached at asparagine 818. Residues 826 to 846 (CLFLIAFVTFFHCFAILPVIL) form a helical membrane-spanning segment.

The protein belongs to the patched family. As to expression, broadly expressed in the brain. Selectively expressed in the thalamic reticular nucleus (TRN) in early development and continues to be enriched in this structure throughout adult life.

The protein localises to the cell membrane. Its subcellular location is the cell projection. The protein resides in the dendritic spine. Required for the development and function of the thalamic reticular nucleus (TRN), a part of the thalamus that is critical for thalamocortical transmission, generation of sleep rhythms, sensorimotor processing and attention. Can bind cholesterol in vitro. This chain is Patched domain-containing protein 1, found in Mus musculus (Mouse).